The sequence spans 868 residues: mRNA-capping enzyme (868 aa).

Lys282 acts as the N6-GMP-lysine intermediate in catalysis. Positions 594 to 868 constitute an mRNA cap 0 methyltransferase domain; it reads GIYRAQTALI…LFGFICLRKN (275 aa). S-adenosyl-L-methionine is bound by residues Lys607, Gly624, Asp646, and 710–712; that span reads LFI.

In the N-terminal section; belongs to the dsDNA virus mRNA guanylyltransferase family. This sequence in the C-terminal section; belongs to the class I-like SAM-binding methyltransferase superfamily. mRNA cap 0 methyltransferase family. As to quaternary structure, part of the viral DNA-directed RNA polymerase that consists of 8 polII-like subunits (RPB1, RPB2, RPB3, RPB5, RPB6, RPB7, RPB9, RPB10), a capping enzyme and a termination factor.

Its subcellular location is the virion. The enzyme catalyses a 5'-end triphospho-ribonucleoside in mRNA + H2O = a 5'-end diphospho-ribonucleoside in mRNA + phosphate + H(+). It catalyses the reaction a 5'-end diphospho-ribonucleoside in mRNA + GTP + H(+) = a 5'-end (5'-triphosphoguanosine)-ribonucleoside in mRNA + diphosphate. The catalysed reaction is a 5'-end (5'-triphosphoguanosine)-ribonucleoside in mRNA + S-adenosyl-L-methionine = a 5'-end (N(7)-methyl 5'-triphosphoguanosine)-ribonucleoside in mRNA + S-adenosyl-L-homocysteine. Its pathway is mRNA processing; mRNA capping. Functionally, probably catalyzes the second reaction in the mRNA cap formation pathway. Forms a covalent complex with GTP. This chain is mRNA-capping enzyme, found in Ornithodoros (relapsing fever ticks).